Reading from the N-terminus, the 211-residue chain is Protein GrpE (211 aa).

A disordered region spans residues Met-1–Leu-43. Residues Asp-11–Ala-23 show a composition bias toward low complexity. The span at Glu-33–Leu-43 shows a compositional bias: basic and acidic residues.

The protein belongs to the GrpE family. In terms of assembly, homodimer.

It localises to the cytoplasm. Participates actively in the response to hyperosmotic and heat shock by preventing the aggregation of stress-denatured proteins, in association with DnaK and GrpE. It is the nucleotide exchange factor for DnaK and may function as a thermosensor. Unfolded proteins bind initially to DnaJ; upon interaction with the DnaJ-bound protein, DnaK hydrolyzes its bound ATP, resulting in the formation of a stable complex. GrpE releases ADP from DnaK; ATP binding to DnaK triggers the release of the substrate protein, thus completing the reaction cycle. Several rounds of ATP-dependent interactions between DnaJ, DnaK and GrpE are required for fully efficient folding. This chain is Protein GrpE, found in Rhizobium etli (strain ATCC 51251 / DSM 11541 / JCM 21823 / NBRC 15573 / CFN 42).